A 163-amino-acid polypeptide reads, in one-letter code: 3-isopropylmalate dehydratase small subunit (163 aa).

The protein belongs to the LeuD family. LeuD type 2 subfamily. Heterodimer of LeuC and LeuD.

It carries out the reaction (2R,3S)-3-isopropylmalate = (2S)-2-isopropylmalate. Its pathway is amino-acid biosynthesis; L-leucine biosynthesis; L-leucine from 3-methyl-2-oxobutanoate: step 2/4. Its function is as follows. Catalyzes the isomerization between 2-isopropylmalate and 3-isopropylmalate, via the formation of 2-isopropylmaleate. The sequence is that of 3-isopropylmalate dehydratase small subunit from Ruminiclostridium cellulolyticum (strain ATCC 35319 / DSM 5812 / JCM 6584 / H10) (Clostridium cellulolyticum).